Consider the following 159-residue polypeptide: D-aminoacyl-tRNA deacylase (159 aa).

A Gly-cisPro motif, important for rejection of L-amino acids motif is present at residues 142 to 143 (GP).

Belongs to the DTD family. Homodimer.

The protein resides in the cytoplasm. It carries out the reaction glycyl-tRNA(Ala) + H2O = tRNA(Ala) + glycine + H(+). The catalysed reaction is a D-aminoacyl-tRNA + H2O = a tRNA + a D-alpha-amino acid + H(+). Its function is as follows. An aminoacyl-tRNA editing enzyme that deacylates mischarged D-aminoacyl-tRNAs. Also deacylates mischarged glycyl-tRNA(Ala), protecting cells against glycine mischarging by AlaRS. Acts via tRNA-based rather than protein-based catalysis; rejects L-amino acids rather than detecting D-amino acids in the active site. By recycling D-aminoacyl-tRNA to D-amino acids and free tRNA molecules, this enzyme counteracts the toxicity associated with the formation of D-aminoacyl-tRNA entities in vivo and helps enforce protein L-homochirality. This chain is D-aminoacyl-tRNA deacylase, found in Albidiferax ferrireducens (strain ATCC BAA-621 / DSM 15236 / T118) (Rhodoferax ferrireducens).